A 561-amino-acid polypeptide reads, in one-letter code: Arginine--tRNA ligase (561 aa).

The short motif at 128 to 138 (ANPTGPLHVGH) is the 'HIGH' region element.

The protein belongs to the class-I aminoacyl-tRNA synthetase family. As to quaternary structure, monomer.

It localises to the cytoplasm. The enzyme catalyses tRNA(Arg) + L-arginine + ATP = L-arginyl-tRNA(Arg) + AMP + diphosphate. This is Arginine--tRNA ligase from Marinobacter nauticus (strain ATCC 700491 / DSM 11845 / VT8) (Marinobacter aquaeolei).